The primary structure comprises 279 residues: 2-dehydro-3-deoxyphosphooctonate aldolase (279 aa).

Belongs to the KdsA family.

The protein localises to the cytoplasm. The catalysed reaction is D-arabinose 5-phosphate + phosphoenolpyruvate + H2O = 3-deoxy-alpha-D-manno-2-octulosonate-8-phosphate + phosphate. Its pathway is carbohydrate biosynthesis; 3-deoxy-D-manno-octulosonate biosynthesis; 3-deoxy-D-manno-octulosonate from D-ribulose 5-phosphate: step 2/3. It functions in the pathway bacterial outer membrane biogenesis; lipopolysaccharide biosynthesis. The protein is 2-dehydro-3-deoxyphosphooctonate aldolase of Methylobacillus flagellatus (strain ATCC 51484 / DSM 6875 / VKM B-1610 / KT).